The following is a 59-amino-acid chain: Large ribosomal subunit protein uL30 (59 aa).

The protein belongs to the universal ribosomal protein uL30 family. Part of the 50S ribosomal subunit.

This chain is Large ribosomal subunit protein uL30, found in Listeria welshimeri serovar 6b (strain ATCC 35897 / DSM 20650 / CCUG 15529 / CIP 8149 / NCTC 11857 / SLCC 5334 / V8).